The primary structure comprises 377 residues: Homocitrate synthase 1 (377 aa).

Residues 4–255 enclose the Pyruvate carboxyltransferase domain; the sequence is VLINDTTLRD…DMGIDTPRLL (252 aa).

The protein belongs to the alpha-IPM synthase/homocitrate synthase family.

The catalysed reaction is acetyl-CoA + 2-oxoglutarate + H2O = (2R)-homocitrate + CoA + H(+). Functionally, this protein is a Fe-Mo-cofactor biosynthetic component. The sequence is that of Homocitrate synthase 1 (nifV1) from Nostoc sp. (strain PCC 7120 / SAG 25.82 / UTEX 2576).